The following is a 195-amino-acid chain: ATP synthase subunit b (195 aa).

The chain crosses the membrane as a helical span at residues 28–48; sequence IFPNVYVLIAHVISLIFLLLL.

It belongs to the ATPase B chain family. In terms of assembly, F-type ATPases have 2 components, F(1) - the catalytic core - and F(0) - the membrane proton channel. F(1) has five subunits: alpha(3), beta(3), gamma(1), delta(1), epsilon(1). F(0) has three main subunits: a(1), b(2) and c(10-14). The alpha and beta chains form an alternating ring which encloses part of the gamma chain. F(1) is attached to F(0) by a central stalk formed by the gamma and epsilon chains, while a peripheral stalk is formed by the delta and b chains.

It is found in the cell membrane. In terms of biological role, f(1)F(0) ATP synthase produces ATP from ADP in the presence of a proton or sodium gradient. F-type ATPases consist of two structural domains, F(1) containing the extramembraneous catalytic core and F(0) containing the membrane proton channel, linked together by a central stalk and a peripheral stalk. During catalysis, ATP synthesis in the catalytic domain of F(1) is coupled via a rotary mechanism of the central stalk subunits to proton translocation. Component of the F(0) channel, it forms part of the peripheral stalk, linking F(1) to F(0). This Malacoplasma penetrans (strain HF-2) (Mycoplasma penetrans) protein is ATP synthase subunit b.